An 85-amino-acid chain; its full sequence is Large ribosomal subunit protein bL31B (85 aa).

Belongs to the bacterial ribosomal protein bL31 family. Type B subfamily. In terms of assembly, part of the 50S ribosomal subunit.

This Kocuria rhizophila (strain ATCC 9341 / DSM 348 / NBRC 103217 / DC2201) protein is Large ribosomal subunit protein bL31B.